Here is a 26-residue protein sequence, read N- to C-terminus: PRKCH upstream open reading frame 2 (26 aa).

As to quaternary structure, interacts with protein kinase C eta as well as other protein kinases including PRKCD, PRKCQ and PRKCE but not with PRKCG or PRKCZ; the interactions lead to inhibition of kinase activity.

In terms of biological role, product of an upstream open reading frame (ORF) of PRKCH which regulates translation of the downstream protein kinase C eta (PKC-eta) ORF. Functions as a repressive element that maintains low basal levels of PKC-eta in growing cells but enhances its expression during stress conditions induced by amino acid starvation in a EIF2AK4/GCN2-dependent manner. In addition to its role in regulating PKC-eta translation, also inhibits the kinase activity of PKC-eta as well as other protein kinases including PRKCD, PRKCQ and PRKCE but not PRKCA, PRKCG or PRKCZ. In Homo sapiens (Human), this protein is PRKCH upstream open reading frame 2.